The following is a 545-amino-acid chain: G-protein coupled receptor 161 (545 aa).

Topologically, residues 1 to 46 are extracellular; that stretch reads MDFVQHALLTASRGALTMSLNSSLSYRKELSNLTATEGGEGGAVSE. N-linked (GlcNAc...) asparagine glycosylation is found at N21 and N32. The chain crosses the membrane as a helical span at residues 47-67; the sequence is FIAIIIITVLVCLGNLVIVVT. Residues 68 to 80 are Cytoplasmic-facing; that stretch reads LYKKSYLLTLSNK. Residues 81 to 101 traverse the membrane as a helical segment; the sequence is FVFSLTLSNFLLSVLVLPFVV. At 102 to 117 the chain is on the extracellular side; that stretch reads TSSIRREWIFGVVWCN. A disulfide bond links C116 and C194. N-linked (GlcNAc...) asparagine glycosylation occurs at N117. The chain crosses the membrane as a helical span at residues 118–139; it reads FSALLYLLISSASMLTLGVIAI. Topologically, residues 140–159 are cytoplasmic; it reads DRYYAVLYPMVYPMKITGNR. Residues 160 to 180 form a helical membrane-spanning segment; sequence AVMALVYIWLHSLIGCLPPLF. The Extracellular portion of the chain corresponds to 181-205; it reads GWSSVEFDEFKWMCVAAWHQEPGYT. The helical transmembrane segment at 206–226 threads the bilayer; sequence IFWQIWCALFPFLIMLVCYGF. Topologically, residues 227–285 are cytoplasmic; it reads IFRVARVKARKVHCGTVVTVEEDSQRSGRKNSSTSTSSSGSRRNALQGVVYSANQCKAL. Residues 286–306 form a helical membrane-spanning segment; sequence ITILVVIGAFMVTWGPYMVVI. Over 307 to 322 the chain is Extracellular; the sequence is TSEALWGKNCVSPTLE. The chain crosses the membrane as a helical span at residues 323–343; sequence TWATWLSFTSAICHPLIYGLW. Residues 344–545 lie on the Cytoplasmic side of the membrane; that stretch reads NKTVRKELLG…EGNVLAAEQR (202 aa).

Belongs to the G-protein coupled receptor 1 family.

The protein resides in the cell projection. It is found in the cilium membrane. It localises to the cell membrane. In terms of biological role, key negative regulator of Shh signaling, which promotes the processing of GLI3 into GLI3R during neural tube development. Recruited by TULP3 and the IFT-A complex to primary cilia and acts as a regulator of the PKA-dependent basal repression machinery in Shh signaling by increasing cAMP levels, leading to promote the PKA-dependent processing of GLI3 into GLI3R and repress the Shh signaling. In presence of SHH, it is removed from primary cilia and is internalized into recycling endosomes, preventing its activity and allowing activation of the Shh signaling. Its ligand is unknown. This chain is G-protein coupled receptor 161 (Gpr161), found in Mus musculus (Mouse).